The following is a 301-amino-acid chain: MTKKEKIIVIVGPTAVGKTALGIQVAQAFNGEIISGDSQQVYCHLDIGTAKASQEEQESAVHHLIDIRDVTQNYSAFDFVQDALEAIKDILSRGKIPIIVGGTGLYIQSLLEGYHLGGNLDQSALLAYRQELESLSDEALLDLMAEKNISLKEWTRRRAIRAIELDRFGKDLQNQEFPYEFMLIGLNDDRSYIYERINQRVDQMLEMGLIEEAKWLYEHYPQVQASRGIGYKELFPYFEGEISLEEASQNLKQNTRRFAKRQLTWFRNRMDVTFYPISEESYPIRIINDIKIFLENKAQDD.

12–19 is a binding site for ATP; that stretch reads GPTAVGKT. Substrate is bound at residue 14–19; that stretch reads TAVGKT. An interaction with substrate tRNA region spans residues 37 to 40; that stretch reads DSQQ.

The protein belongs to the IPP transferase family. Monomer. Requires Mg(2+) as cofactor.

It catalyses the reaction adenosine(37) in tRNA + dimethylallyl diphosphate = N(6)-dimethylallyladenosine(37) in tRNA + diphosphate. Its function is as follows. Catalyzes the transfer of a dimethylallyl group onto the adenine at position 37 in tRNAs that read codons beginning with uridine, leading to the formation of N6-(dimethylallyl)adenosine (i(6)A). The polypeptide is tRNA dimethylallyltransferase (Streptococcus uberis (strain ATCC BAA-854 / 0140J)).